The sequence spans 108 residues: Class I hydrophobin 3 (108 aa).

Positions 1 to 17 (MFFQTTIVAALASLAVA) are cleaved as a signal peptide. 4 cysteine pairs are disulfide-bonded: C28–C87, C35–C81, C36–C69, and C88–C101. An N-linked (GlcNAc...) asparagine glycan is attached at N37.

Belongs to the fungal hydrophobin family. Self-assembles to form functional amyloid fibrils called rodlets. Self-assembly into fibrillar rodlets occurs spontaneously at hydrophobic:hydrophilic interfaces and the rodlets further associate laterally to form amphipathic monolayers.

It localises to the secreted. Its subcellular location is the cell wall. Aerial growth, conidiation, and dispersal of filamentous fungi in the environment rely upon a capability of their secreting small amphipathic proteins called hydrophobins (HPBs) with low sequence identity. Class I can self-assemble into an outermost layer of rodlet bundles on aerial cell surfaces, conferring cellular hydrophobicity that supports fungal growth, development and dispersal; whereas Class II form highly ordered films at water-air interfaces through intermolecular interactions but contribute nothing to the rodlet structure. Vmh3 is a class I hydrophobin that is essential for the maintenance of the surface hydrophobicity of the mycelium and might be involved in the development of fruiting bodies. Plays an important role in hyphal resistance against environmental stress. Necessary for the efficient biodegradation of lignin. The protein is Class I hydrophobin 3 of Pleurotus ostreatus (strain PC15) (Oyster mushroom).